A 595-amino-acid chain; its full sequence is Protein UL31 (595 aa).

The first 23 residues, 1–23 (MGDKPTLVTLLTVAVSSPPPSSP), serve as a signal peptide directing secretion. A disordered region spans residues 47–94 (TATSEVGEKTAEQEVAAADPETGNERRENRENEGGETRTTGTTAVKRS). Positions 69-82 (GNERRENRENEGGE) are enriched in basic and acidic residues. 2 N-linked (GlcNAc...) asparagine; by host glycosylation sites follow: Asn-176 and Asn-197.

The protein belongs to the herpesviridae U10 family. In terms of assembly, interacts with host CGAS.

It localises to the host cytoplasm. The protein localises to the host nucleus. In terms of biological role, plays a role in the inhibition of host innate immune system by targeting host CGAS and promoting dissociation of DNA from CGAS, thereby inhibiting the enzymatic activity of CGAS. The chain is Protein UL31 from Homo sapiens (Human).